The sequence spans 326 residues: N-acetyl-gamma-glutamyl-phosphate reductase (326 aa).

Residue cysteine 155 is part of the active site.

Belongs to the NAGSA dehydrogenase family. Type 1 subfamily.

The protein resides in the cytoplasm. The catalysed reaction is N-acetyl-L-glutamate 5-semialdehyde + phosphate + NADP(+) = N-acetyl-L-glutamyl 5-phosphate + NADPH + H(+). Its pathway is amino-acid biosynthesis; L-arginine biosynthesis; N(2)-acetyl-L-ornithine from L-glutamate: step 3/4. In terms of biological role, catalyzes the NADPH-dependent reduction of N-acetyl-5-glutamyl phosphate to yield N-acetyl-L-glutamate 5-semialdehyde. This Shewanella denitrificans (strain OS217 / ATCC BAA-1090 / DSM 15013) protein is N-acetyl-gamma-glutamyl-phosphate reductase.